Here is a 492-residue protein sequence, read N- to C-terminus: Ketol-acid reductoisomerase (NADP(+)) (492 aa).

In terms of domain architecture, KARI N-terminal Rossmann spans 14 to 208; the sequence is LDQLGKCRFM…GGHRAGVLQS (195 aa). NADP(+) is bound by residues 45–48, Arg68, Arg76, Ser78, and 108–110; these read CGAQ and DKQ. His132 is a catalytic residue. Gly158 lines the NADP(+) pocket. 2 KARI C-terminal knotted domains span residues 209–344 and 345–485; these read SFVA…NAPQ and FDGK…MKDM. Mg(2+) contacts are provided by Asp217, Glu221, Glu389, and Glu393. Ser414 contributes to the substrate binding site.

It belongs to the ketol-acid reductoisomerase family. Requires Mg(2+) as cofactor.

It carries out the reaction (2R)-2,3-dihydroxy-3-methylbutanoate + NADP(+) = (2S)-2-acetolactate + NADPH + H(+). The enzyme catalyses (2R,3R)-2,3-dihydroxy-3-methylpentanoate + NADP(+) = (S)-2-ethyl-2-hydroxy-3-oxobutanoate + NADPH + H(+). Its pathway is amino-acid biosynthesis; L-isoleucine biosynthesis; L-isoleucine from 2-oxobutanoate: step 2/4. It functions in the pathway amino-acid biosynthesis; L-valine biosynthesis; L-valine from pyruvate: step 2/4. Its function is as follows. Involved in the biosynthesis of branched-chain amino acids (BCAA). Catalyzes an alkyl-migration followed by a ketol-acid reduction of (S)-2-acetolactate (S2AL) to yield (R)-2,3-dihydroxy-isovalerate. In the isomerase reaction, S2AL is rearranged via a Mg-dependent methyl migration to produce 3-hydroxy-3-methyl-2-ketobutyrate (HMKB). In the reductase reaction, this 2-ketoacid undergoes a metal-dependent reduction by NADPH to yield (R)-2,3-dihydroxy-isovalerate. This Pectobacterium atrosepticum (strain SCRI 1043 / ATCC BAA-672) (Erwinia carotovora subsp. atroseptica) protein is Ketol-acid reductoisomerase (NADP(+)).